The following is a 108-amino-acid chain: MDSFQFLSVEQAYQFWVSQSAILVDVRDPQSYRLGHATGAFHLTNDTLNQFLQDADFDVPVMVMCYHGHSSQGAAQYLVNMGFETVYSINGGFEAWLREFPQAITSLQ.

The Rhodanese domain maps to 17–105 (VSQSAILVDV…WLREFPQAIT (89 aa)). Cys65 (cysteine persulfide intermediate) is an active-site residue.

Belongs to the GlpE family.

The protein localises to the cytoplasm. It carries out the reaction thiosulfate + hydrogen cyanide = thiocyanate + sulfite + 2 H(+). The catalysed reaction is thiosulfate + [thioredoxin]-dithiol = [thioredoxin]-disulfide + hydrogen sulfide + sulfite + 2 H(+). Transferase that catalyzes the transfer of sulfur from thiosulfate to thiophilic acceptors such as cyanide or dithiols. May function in a CysM-independent thiosulfate assimilation pathway by catalyzing the conversion of thiosulfate to sulfite, which can then be used for L-cysteine biosynthesis. This Proteus mirabilis (strain HI4320) protein is Thiosulfate sulfurtransferase GlpE.